We begin with the raw amino-acid sequence, 622 residues long: 1-deoxy-D-xylulose-5-phosphate synthase (622 aa).

Residues H80 and 121 to 123 (GHS) each bind thiamine diphosphate. A Mg(2+)-binding site is contributed by D152. Thiamine diphosphate contacts are provided by residues 153 to 154 (GA), N181, Y288, and E370. N181 lines the Mg(2+) pocket.

This sequence belongs to the transketolase family. DXPS subfamily. As to quaternary structure, homodimer. It depends on Mg(2+) as a cofactor. Thiamine diphosphate is required as a cofactor.

The enzyme catalyses D-glyceraldehyde 3-phosphate + pyruvate + H(+) = 1-deoxy-D-xylulose 5-phosphate + CO2. Its pathway is metabolic intermediate biosynthesis; 1-deoxy-D-xylulose 5-phosphate biosynthesis; 1-deoxy-D-xylulose 5-phosphate from D-glyceraldehyde 3-phosphate and pyruvate: step 1/1. Its function is as follows. Catalyzes the acyloin condensation reaction between C atoms 2 and 3 of pyruvate and glyceraldehyde 3-phosphate to yield 1-deoxy-D-xylulose-5-phosphate (DXP). The chain is 1-deoxy-D-xylulose-5-phosphate synthase from Shewanella loihica (strain ATCC BAA-1088 / PV-4).